We begin with the raw amino-acid sequence, 1081 residues long: Teashirt homolog 3 (1081 aa).

2 disordered regions span residues 141–161 (PSSE…SSCG) and 238–257 (HYRD…WSKP). A compositionally biased stretch (low complexity) spans 148-161 (GSSSSSSSSSSSCG). 2 consecutive C2H2-type zinc fingers follow at residues 214–238 (FRCK…ETGH) and 275–299 (LKCM…KTKH). Basic and acidic residues predominate over residues 238 to 247 (HYRDDNHETD). Residues 325-364 (SLELELPSSPDSTGGTPKATISDTNDALQKNSNPYITPNN) form a disordered region. Over residues 335–364 (DSTGGTPKATISDTNDALQKNSNPYITPNN) the composition is skewed to polar residues. A C2H2-type 3; atypical zinc finger spans residues 386-404 (LKCMECGSSHDTLQELTAH). Residues 473–491 (EVDKEKAVTDEKPKQKDKP) are compositionally biased toward basic and acidic residues. 4 disordered regions span residues 473-502 (EVDK…DISS), 579-604 (NSEI…PMPK), 626-687 (EKMK…LAEP), and 855-897 (TESH…RQSN). Residues 581–603 (EIVSPTKNQTLVSPPSSQTSPMP) are compositionally biased toward polar residues. Residues 606–630 (NFHAMEELVKKVTEKVAKVEEKMKE) are a coiled coil. Ser682 is modified (phosphoserine). Low complexity predominate over residues 856–869 (ESHTSKSSTPSSIS). A DNA-binding region (homeobox; atypical) is located at residues 891–961 (RKGRQSNWNP…NVKYQLRRTG (71 aa)). 2 C2H2-type zinc fingers span residues 976 to 998 (FFCN…LESH) and 1041 to 1064 (YQCK…SKTH).

Belongs to the teashirt C2H2-type zinc-finger protein family. In terms of assembly, interacts (via homeobox domain) with APBB1 (via PID domain 1). Interacts (via N-terminus) with HDAC1 and HDAC2; the interaction is direct. Found in a trimeric complex with APBB1 and HDAC1; the interaction between HDAC1 and APBB1 is mediated by TSHZ3. Expressed in brain; strongly reduced in post-mortem elderly subjects with Alzheimer disease. Expressed in the fetal neocortex.

The protein localises to the nucleus. It localises to the cell projection. It is found in the growth cone. Transcriptional regulator involved in developmental processes. Functions in association with APBB1, SET and HDAC factors as a transcriptional repressor, that inhibits the expression of CASP4. TSHZ3-mediated transcription repression involves the recruitment of histone deacetylases HDAC1 and HDAC2. Associates with chromatin in a region surrounding the CASP4 transcriptional start site(s). Regulates the development of neurons involved in both respiratory rhythm and airflow control. Promotes maintenance of nucleus ambiguus (nA) motoneurons, which govern upper airway function, and establishes a respiratory rhythm generator (RRG) activity compatible with survival at birth. Involved in the differentiation of the proximal uretic smooth muscle cells during developmental processes. Involved in the up-regulation of myocardin, that directs the expression of smooth muscle cells in the proximal ureter. Involved in the modulation of glutamatergic synaptic transmission and long-term synaptic potentiation. The chain is Teashirt homolog 3 (TSHZ3) from Homo sapiens (Human).